The following is a 343-amino-acid chain: Isopentenyl-diphosphate delta-isomerase (343 aa).

6–7 serves as a coordination point for substrate; sequence RK. Residues Ser63, 64 to 66, Ser94, and Asn122 each bind FMN; that span reads SMT. Substrate is bound at residue 94–96; it reads SMR. Gln157 contacts substrate. Mg(2+) is bound at residue Glu158. FMN-binding positions include Lys189, Thr219, 269 to 271, and 290 to 291; these read GLK and AG.

It belongs to the IPP isomerase type 2 family. In terms of assembly, homooctamer. Dimer of tetramers. FMN is required as a cofactor. It depends on NADPH as a cofactor. The cofactor is Mg(2+).

Its subcellular location is the cytoplasm. It catalyses the reaction isopentenyl diphosphate = dimethylallyl diphosphate. Functionally, involved in the biosynthesis of isoprenoids. Catalyzes the 1,3-allylic rearrangement of the homoallylic substrate isopentenyl (IPP) to its allylic isomer, dimethylallyl diphosphate (DMAPP). This Rickettsia bellii (strain OSU 85-389) protein is Isopentenyl-diphosphate delta-isomerase.